We begin with the raw amino-acid sequence, 513 residues long: Ribonuclease Y (513 aa).

The chain crosses the membrane as a helical span at residues 3–23; sequence IGTLLLFTFLGLVAGATAVWL. Residues 77–96 form a disordered region; it reads LQSVESKLKSREQTLNQRQE. Positions 82–96 are enriched in basic and acidic residues; that stretch reads SKLKSREQTLNQRQE. The region spanning 203–263 is the KH domain; it reads SVTVFHIESD…VRREIARLAL (61 aa). The HD domain occupies 329–422; sequence LLQHSRETAN…VQVCDAISGA (94 aa).

It belongs to the RNase Y family.

The protein localises to the cell membrane. Functionally, endoribonuclease that initiates mRNA decay. This Porphyromonas gingivalis (strain ATCC BAA-308 / W83) protein is Ribonuclease Y.